The following is a 122-amino-acid chain: MPTIQQLVRKGRHDKTAKVATAALKGSPQRRGVCTRVYTTTPKKPNSALRKVARVRLTSGIEVSAYIPGEGHNLQEHSMVLVRGGRVKDLPGVRYKIIRGALDTQGVKDRKQARSRYGAKRG.

It belongs to the universal ribosomal protein uS12 family. As to quaternary structure, part of the 30S ribosomal subunit. Contacts proteins S8 and S17. May interact with IF1 in the 30S initiation complex.

Functionally, with S4 and S5 plays an important role in translational accuracy. Its function is as follows. Interacts with and stabilizes bases of the 16S rRNA that are involved in tRNA selection in the A site and with the mRNA backbone. Located at the interface of the 30S and 50S subunits, it traverses the body of the 30S subunit contacting proteins on the other side and probably holding the rRNA structure together. The combined cluster of proteins S8, S12 and S17 appears to hold together the shoulder and platform of the 30S subunit. The protein is Small ribosomal subunit protein uS12 of Corynebacterium efficiens (strain DSM 44549 / YS-314 / AJ 12310 / JCM 11189 / NBRC 100395).